A 277-amino-acid chain; its full sequence is Phosphoribosylaminoimidazole-succinocarboxamide synthase (277 aa).

This sequence belongs to the SAICAR synthetase family.

It catalyses the reaction 5-amino-1-(5-phospho-D-ribosyl)imidazole-4-carboxylate + L-aspartate + ATP = (2S)-2-[5-amino-1-(5-phospho-beta-D-ribosyl)imidazole-4-carboxamido]succinate + ADP + phosphate + 2 H(+). It participates in purine metabolism; IMP biosynthesis via de novo pathway; 5-amino-1-(5-phospho-D-ribosyl)imidazole-4-carboxamide from 5-amino-1-(5-phospho-D-ribosyl)imidazole-4-carboxylate: step 1/2. This Salinispora arenicola (strain CNS-205) protein is Phosphoribosylaminoimidazole-succinocarboxamide synthase.